The primary structure comprises 414 residues: Tyrosine--tRNA ligase (414 aa).

An L-tyrosine-binding site is contributed by Tyr38. The short motif at 43 to 52 (PTATSLHLGN) is the 'HIGH' region element. L-tyrosine is bound by residues Tyr165 and Gln169. The 'KMSKS' region signature appears at 228–232 (KFGKS). Residue Lys231 coordinates ATP. One can recognise an S4 RNA-binding domain in the interval 349 to 414 (FNANQIIDLG…KKYFFMIELI (66 aa)).

It belongs to the class-I aminoacyl-tRNA synthetase family. TyrS type 1 subfamily. As to quaternary structure, homodimer.

Its subcellular location is the cytoplasm. The catalysed reaction is tRNA(Tyr) + L-tyrosine + ATP = L-tyrosyl-tRNA(Tyr) + AMP + diphosphate + H(+). Its function is as follows. Catalyzes the attachment of tyrosine to tRNA(Tyr) in a two-step reaction: tyrosine is first activated by ATP to form Tyr-AMP and then transferred to the acceptor end of tRNA(Tyr). This Mesomycoplasma hyopneumoniae (strain 7448) (Mycoplasma hyopneumoniae) protein is Tyrosine--tRNA ligase.